The chain runs to 188 residues: Probable RNA 2'-phosphotransferase (188 aa).

The protein belongs to the KptA/TPT1 family.

In terms of biological role, removes the 2'-phosphate from RNA via an intermediate in which the phosphate is ADP-ribosylated by NAD followed by a presumed transesterification to release the RNA and generate ADP-ribose 1''-2''-cyclic phosphate (APPR&gt;P). May function as an ADP-ribosylase. This chain is Probable RNA 2'-phosphotransferase, found in Pseudomonas savastanoi pv. phaseolicola (strain 1448A / Race 6) (Pseudomonas syringae pv. phaseolicola (strain 1448A / Race 6)).